The primary structure comprises 93 residues: Bombyxin B-11 (93 aa).

Residues 1–22 (MMKTAVMFILVVVISLTYSSEE) form the signal peptide. 3 cysteine pairs are disulfide-bonded: cysteine 30/cysteine 75, cysteine 42/cysteine 92, and cysteine 74/cysteine 79. Residues 49-64 (GGAQYAPYWQETYLRS) constitute a propeptide, bombyxin B-11 C peptide.

Belongs to the insulin family. In terms of assembly, heterodimer of a B chain and an A chain linked by two disulfide bonds.

It localises to the secreted. Brain peptide responsible for activation of prothoracic glands to produce ecdysone in insects. In Bombyx mori (Silk moth), this protein is Bombyxin B-11 (BBXB11).